The following is a 106-amino-acid chain: MKGGLGNLMKQAQQLQSNMEKAQEELANMEVTGQAGGGMVSIVMTGRYDCRRISIHSELWQEDKEMVEDLVAAAINDAVRQVETQSKEKMSSMTSGMLPPGFKLPL.

2 disordered regions span residues 1–20 and 85–106; these read MKGG…SNME and QSKE…KLPL. Positions 10–20 are enriched in polar residues; sequence KQAQQLQSNME.

Belongs to the YbaB/EbfC family. Homodimer.

The protein localises to the cytoplasm. It is found in the nucleoid. Binds to DNA and alters its conformation. May be involved in regulation of gene expression, nucleoid organization and DNA protection. The protein is Nucleoid-associated protein Noc_2594 of Nitrosococcus oceani (strain ATCC 19707 / BCRC 17464 / JCM 30415 / NCIMB 11848 / C-107).